A 359-amino-acid polypeptide reads, in one-letter code: CMP-N-acetylneuraminate-poly-alpha-2,8-sialyltransferase (359 aa).

Topologically, residues 1–7 (MRSIRKR) are cytoplasmic. A helical; Signal-anchor for type II membrane protein membrane pass occupies residues 8–20 (WTICTISLLLIFY). Residues 21 to 359 (KTKEIARTEE…KLTTGKCVKQ (339 aa)) are Lumenal-facing. 3 N-linked (GlcNAc...) asparagine glycosylation sites follow: Asn-50, Asn-74, and Asn-119. Intrachain disulfides connect Cys-142/Cys-292 and Cys-156/Cys-356. Residues Asn-147 and Asn-170 each coordinate CMP-N-acetyl-beta-neuraminate. Asn-204 and Asn-219 each carry an N-linked (GlcNAc...) asparagine glycan. Ser-279, Thr-280, Gly-281, and Trp-301 together coordinate CMP-N-acetyl-beta-neuraminate. Catalysis depends on His-331, which acts as the Proton donor/acceptor.

It belongs to the glycosyltransferase 29 family. Post-translationally, autopolysialylated.

Its subcellular location is the golgi apparatus membrane. It localises to the secreted. It carries out the reaction [N-acetyl-alpha-D-neuraminosyl-(2-&gt;8)](n) + CMP-N-acetyl-beta-neuraminate = [N-acetyl-alpha-D-neuraminosyl-(2-&gt;8)](n+1) + CMP + H(+). Catalyzes the transfer of a sialic acid from a CMP-linked sialic acid donor onto a terminal alpha-2,3-, alpha-2,6-, or alpha-2,8-linked sialic acid of an N-linked glycan protein acceptor through alpha-2,8-linkages. Therefore, participates in polysialic acid synthesis on various sialylated N-acetyllactosaminyl oligosaccharides, including NCAM1 N-glycans, FETUB N-glycans and AHSG. It is noteworthy that alpha-2,3-linked sialic acid is apparently a better acceptor than alpha-2,6-linked sialic acid. The polypeptide is CMP-N-acetylneuraminate-poly-alpha-2,8-sialyltransferase (ST8SIA4) (Pan troglodytes (Chimpanzee)).